A 142-amino-acid polypeptide reads, in one-letter code: MGRGLFAARKLMENRKKFRWSDRRFVRRTLGLAAKADPLEGAPMARGIVLEKIGIEARQPNSAIRKAVRVQLIKNGRQITAFCPGDGAINFIDEHDEVIVEKIGGRMGRSMGDIPGVRYKVVKVNNTSLRELVRGRKEKRLR.

This sequence belongs to the universal ribosomal protein uS12 family. Part of the 30S ribosomal subunit.

Its function is as follows. With S4 and S5 plays an important role in translational accuracy. Located at the interface of the 30S and 50S subunits. The protein is Small ribosomal subunit protein uS12 of Archaeoglobus fulgidus (strain ATCC 49558 / DSM 4304 / JCM 9628 / NBRC 100126 / VC-16).